A 182-amino-acid polypeptide reads, in one-letter code: Phospholipase A2 inhibitor gamma subunit A2 (182 aa).

8 cysteine pairs are disulfide-bonded: Cys3–Cys27, Cys6–Cys13, Cys20–Cys48, Cys54–Cys75, Cys76–Cys81, Cys99–Cys124, Cys117–Cys146, and Cys150–Cys172. Residue Asn157 is glycosylated (N-linked (GlcNAc...) asparagine).

The protein belongs to the CNF-like-inhibitor family. Heterodimer of subunit A and subunit B.

Its subcellular location is the secreted. Functionally, phospholipase A2 (PA2) inhibitor. Inhibits the enzymatic activity of PA2 of Deinagkistrodon acutus. Also shows a wide anti-hemorrhage activities to D.acutus, Naja atra and Agkistrodon halys venom. The native protein is more potent than the recombinant one. The protein is Phospholipase A2 inhibitor gamma subunit A2 of Trimerodytes annularis (Red-bellied annulate keelback).